We begin with the raw amino-acid sequence, 21 residues long: Phenol-soluble modulin alpha 1 peptide (21 aa).

It belongs to the phenol-soluble modulin alpha peptides family.

In terms of biological role, peptide which can recruit, activate and subsequently lyse human neutrophils, thus eliminating the main cellular defense against infection. This is Phenol-soluble modulin alpha 1 peptide (psmA1) from Staphylococcus aureus (strain Mu3 / ATCC 700698).